Consider the following 517-residue polypeptide: Crotonobetaine/carnitine--CoA ligase (517 aa).

Belongs to the ATP-dependent AMP-binding enzyme family.

It carries out the reaction 4-(trimethylamino)butanoate + ATP + CoA = 4-(trimethylamino)butanoyl-CoA + AMP + diphosphate. The catalysed reaction is crotonobetaine + ATP + CoA = crotonobetainyl-CoA + AMP + diphosphate. The enzyme catalyses (R)-carnitine + ATP + CoA = (R)-carnitinyl-CoA + AMP + diphosphate. The protein operates within amine and polyamine metabolism; carnitine metabolism. Functionally, catalyzes the transfer of CoA to carnitine, generating the initial carnitinyl-CoA needed for the CaiB reaction cycle. Also has activity toward crotonobetaine and gamma-butyrobetaine. The polypeptide is Crotonobetaine/carnitine--CoA ligase (Escherichia coli O45:K1 (strain S88 / ExPEC)).